A 423-amino-acid polypeptide reads, in one-letter code: UPF0229 protein PSEEN0423 (423 aa).

Residues 85–107 form a disordered region; the sequence is GEHIARPQGGGGGGGRGKAGNSG. Residues 92–107 show a composition bias toward gly residues; the sequence is QGGGGGGGRGKAGNSG.

This sequence belongs to the UPF0229 family.

The polypeptide is UPF0229 protein PSEEN0423 (Pseudomonas entomophila (strain L48)).